The chain runs to 144 residues: Large ribosomal subunit protein uL15 (144 aa).

Positions 1–51 (MKLNELKPATGSRSKRLRKGRGLSSGHGFTSGRGTKGQKAHGKTRLGFEGG) are disordered. Gly residues predominate over residues 23 to 35 (LSSGHGFTSGRGT).

The protein belongs to the universal ribosomal protein uL15 family. In terms of assembly, part of the 50S ribosomal subunit.

In terms of biological role, binds to the 23S rRNA. This Limosilactobacillus reuteri (strain DSM 20016) (Lactobacillus reuteri) protein is Large ribosomal subunit protein uL15.